A 211-amino-acid chain; its full sequence is Large ribosomal subunit protein uL3 (211 aa).

Position 151 is an N5-methylglutamine (glutamine 151).

This sequence belongs to the universal ribosomal protein uL3 family. As to quaternary structure, part of the 50S ribosomal subunit. Forms a cluster with proteins L14 and L19. Post-translationally, methylated by PrmB.

In terms of biological role, one of the primary rRNA binding proteins, it binds directly near the 3'-end of the 23S rRNA, where it nucleates assembly of the 50S subunit. The chain is Large ribosomal subunit protein uL3 from Francisella tularensis subsp. tularensis (strain FSC 198).